A 189-amino-acid polypeptide reads, in one-letter code: Inosine triphosphate pyrophosphatase (189 aa).

An ITP-binding site is contributed by 14–19; that stretch reads TGNQNK. Glu-42 serves as a coordination point for Mg(2+). Residues Lys-54, 70–71, Lys-87, 146–149, Lys-167, and 172–173 contribute to the ITP site; these read DT, FGWD, and HR.

The protein belongs to the HAM1 NTPase family. As to quaternary structure, homodimer. The cofactor is Mg(2+). Mn(2+) serves as cofactor.

The protein resides in the cytoplasm. Its subcellular location is the nucleus. It catalyses the reaction ITP + H2O = IMP + diphosphate + H(+). The catalysed reaction is dITP + H2O = dIMP + diphosphate + H(+). It carries out the reaction XTP + H2O = XMP + diphosphate + H(+). In terms of biological role, pyrophosphatase that hydrolyzes non-canonical purine nucleotides such as inosine triphosphate (ITP), deoxyinosine triphosphate (dITP) or xanthosine 5'-triphosphate (XTP) to their respective monophosphate derivatives. The enzyme does not distinguish between the deoxy- and ribose forms. Probably excludes non-canonical purines from RNA and DNA precursor pools, thus preventing their incorporation into RNA and DNA and avoiding chromosomal lesions. The sequence is that of Inosine triphosphate pyrophosphatase from Pyricularia oryzae (strain 70-15 / ATCC MYA-4617 / FGSC 8958) (Rice blast fungus).